Reading from the N-terminus, the 249-residue chain is MSGHSKWATIKRKKDAIDSKRGAIFTRVGKEITVAAKMGGGDPEGNPRLRLAILKAKSVNMPKDNIERAIKKGTGELEGVVYEECLYECFGPAGIAIMVSAVTDKKSRTTPEIKSILTKLGGSLATSGSVSRLFEKKGVIVLESSQIGEDKLVDLAVGEGAEDVINEGEVYRVITTPDDYESVLHALNEKGLKSEESEIRYIALVSSEIADKEVAKKVMKLIEQLDGHDDVTSVTSNFELAASLEKEFE.

This sequence belongs to the TACO1 family.

The protein localises to the cytoplasm. This Leptospira borgpetersenii serovar Hardjo-bovis (strain JB197) protein is Probable transcriptional regulatory protein LBJ_0543.